The primary structure comprises 262 residues: MDKLSLYGETFTSRLLIGSALYPSPAIMLDSVRASGAEIITLSLRRQNPAQQDGKAIWDYIRSSGCKLLPNTAGCKSAKEAVTLAEMSREIFQTDWLKLEVIGDDYTLQPDPYGLVEAAKELSKRGFKVLPYCTEDLVLCRRLLDAGCEALMPWGAPIGTGQGLLNKYNLGMLRERLPDTPMIIDAGLGAPSHATEAMEMGFDAVLLNTAIAKAHDPVGMGVAFKLAVEAGRAGYNAGLMLKRQTASPSTPTIGMPFWRRHD.

Residue K98 is the Schiff-base intermediate with DXP of the active site. 1-deoxy-D-xylulose 5-phosphate-binding positions include G159, 186–187 (AG), and 208–209 (NT).

The protein belongs to the ThiG family. In terms of assembly, homotetramer. Forms heterodimers with either ThiH or ThiS.

It localises to the cytoplasm. The catalysed reaction is [ThiS sulfur-carrier protein]-C-terminal-Gly-aminoethanethioate + 2-iminoacetate + 1-deoxy-D-xylulose 5-phosphate = [ThiS sulfur-carrier protein]-C-terminal Gly-Gly + 2-[(2R,5Z)-2-carboxy-4-methylthiazol-5(2H)-ylidene]ethyl phosphate + 2 H2O + H(+). The protein operates within cofactor biosynthesis; thiamine diphosphate biosynthesis. Its function is as follows. Catalyzes the rearrangement of 1-deoxy-D-xylulose 5-phosphate (DXP) to produce the thiazole phosphate moiety of thiamine. Sulfur is provided by the thiocarboxylate moiety of the carrier protein ThiS. In vitro, sulfur can be provided by H(2)S. The protein is Thiazole synthase of Hahella chejuensis (strain KCTC 2396).